The chain runs to 61 residues: Potassium channel toxin kappa-KTx 2.8 (61 aa).

The signal sequence occupies residues 1–21 (GTVYVFLLLLAFGIFTDISNA). Positions 22 to 35 (CSEQMDDEDSYEVE) are excised as a propeptide. Intrachain disulfides connect Cys41/Cys59 and Cys45/Cys55.

It belongs to the short scorpion toxin superfamily. Potassium channel inhibitor kappa-KTx family. Kappa-KTx 2 subfamily. As to expression, expressed by the venom gland.

The protein resides in the secreted. In terms of biological role, voltage-gated potassium channel inhibitor (Kv) that acts on Kv1.3/KCNA3 and Kv7.1/KCNQ1. 1 uM of the toxin inhibits Kv1.3/KCNA3 currents by 35.1%, whereas 10 uM of the toxin inhibits Kv7.1/KCNQ1 currents by 44.9%. This Heterometrus petersii (Asian forest scorpion) protein is Potassium channel toxin kappa-KTx 2.8.